A 437-amino-acid chain; its full sequence is Enolase 2 (437 aa).

Substrate is bound by residues His-160 and Glu-169. The active-site Proton donor is the Glu-212. Mg(2+)-binding residues include Asp-247, Glu-296, and Asp-321. Residues Glu-296 and Asp-321 each contribute to the substrate site. The Proton acceptor role is filled by Lys-346. Substrate contacts are provided by residues 373–376 (SHRS) and Lys-397.

This sequence belongs to the enolase family. In terms of assembly, homodimer. The cofactor is Mg(2+).

The protein localises to the cytoplasm. It catalyses the reaction (2R)-2-phosphoglycerate = phosphoenolpyruvate + H2O. Its pathway is carbohydrate degradation; glycolysis; pyruvate from D-glyceraldehyde 3-phosphate: step 4/5. The protein is Enolase 2 (ENO2) of Candida glabrata (strain ATCC 2001 / BCRC 20586 / JCM 3761 / NBRC 0622 / NRRL Y-65 / CBS 138) (Yeast).